An 88-amino-acid polypeptide reads, in one-letter code: HssA/B-like protein 6 (88 aa).

Positions 1 to 22 (MSILSALTSISNPMKSSNSNVA) are disordered.

It belongs to the hssA/B family.

This is HssA/B-like protein 6 (hssl6) from Dictyostelium discoideum (Social amoeba).